Here is a 216-residue protein sequence, read N- to C-terminus: DNA repair and recombination protein RadB (216 aa).

It belongs to the eukaryotic RecA-like protein family. RadB subfamily.

Functionally, involved in DNA repair and in homologous recombination. May regulate the cleavage reactions of the branch-structured DNA. Has a very weak ATPase activity that is not stimulated by DNA. Binds DNA but does not promote DNA strands exchange. The chain is DNA repair and recombination protein RadB from Methanococcus maripaludis (strain C5 / ATCC BAA-1333).